The following is a 250-amino-acid chain: 2,3-bisphosphoglycerate-dependent phosphoglycerate mutase (250 aa).

Residues Arg8–Asn15, Thr21–Gly22, Arg60, Glu87–Tyr90, Lys98, Arg114–Arg115, and Gly183–Asn184 contribute to the substrate site. The active-site Tele-phosphohistidine intermediate is His9. Glu87 functions as the Proton donor/acceptor in the catalytic mechanism.

The protein belongs to the phosphoglycerate mutase family. BPG-dependent PGAM subfamily. In terms of assembly, homodimer.

It catalyses the reaction (2R)-2-phosphoglycerate = (2R)-3-phosphoglycerate. It participates in carbohydrate degradation; glycolysis; pyruvate from D-glyceraldehyde 3-phosphate: step 3/5. In terms of biological role, catalyzes the interconversion of 2-phosphoglycerate and 3-phosphoglycerate. This Bordetella petrii (strain ATCC BAA-461 / DSM 12804 / CCUG 43448) protein is 2,3-bisphosphoglycerate-dependent phosphoglycerate mutase.